Consider the following 298-residue polypeptide: GTPase Era (298 aa).

The Era-type G domain occupies 3–170 (KSGFVAILGR…VQLLKDNLEE (168 aa)). The segment at 11–18 (GRPNVGKS) is G1. GTP is bound at residue 11 to 18 (GRPNVGKS). A G2 region spans residues 37–41 (QTTRN). The tract at residues 58–61 (DTPG) is G3. Residues 58–62 (DTPGI) and 120–123 (NKID) each bind GTP. The tract at residues 120–123 (NKID) is G4. Residues 149–151 (ISA) are G5. In terms of domain architecture, KH type-2 spans 201–279 (TQQEVPHSVA…YLETWVKVKK (79 aa)).

The protein belongs to the TRAFAC class TrmE-Era-EngA-EngB-Septin-like GTPase superfamily. Era GTPase family. In terms of assembly, monomer.

Its subcellular location is the cytoplasm. It is found in the cell membrane. In terms of biological role, an essential GTPase that binds both GDP and GTP, with rapid nucleotide exchange. Plays a role in 16S rRNA processing and 30S ribosomal subunit biogenesis and possibly also in cell cycle regulation and energy metabolism. This Streptococcus equi subsp. equi (strain 4047) protein is GTPase Era.